The chain runs to 98 residues: Large ribosomal subunit protein uL23c (98 aa).

The protein belongs to the universal ribosomal protein uL23 family. Part of the 50S ribosomal subunit.

It localises to the plastid. In terms of biological role, binds to 23S rRNA. In Euglena longa (Euglenophycean alga), this protein is Large ribosomal subunit protein uL23c (rpl23).